Reading from the N-terminus, the 85-residue chain is Probable dolichol-phosphate mannosyltransferase subunit 3 (85 aa).

Helical transmembrane passes span 13 to 33 and 37 to 57; these read VLLV…LSYI and AHCL…VATF.

This sequence belongs to the DPM3 family.

The protein localises to the endoplasmic reticulum membrane. Its pathway is protein modification; protein glycosylation. Stabilizer subunit of the dolichol-phosphate-mannose synthase complex. This is Probable dolichol-phosphate mannosyltransferase subunit 3 from Caenorhabditis briggsae.